A 427-amino-acid polypeptide reads, in one-letter code: Serine hydroxymethyltransferase (427 aa).

(6S)-5,6,7,8-tetrahydrofolate is bound by residues Leu-122 and 126–128; that span reads GHL. Position 231 is an N6-(pyridoxal phosphate)lysine (Lys-231).

The protein belongs to the SHMT family. As to quaternary structure, homodimer. Pyridoxal 5'-phosphate is required as a cofactor.

It is found in the cytoplasm. It carries out the reaction (6R)-5,10-methylene-5,6,7,8-tetrahydrofolate + glycine + H2O = (6S)-5,6,7,8-tetrahydrofolate + L-serine. Its pathway is one-carbon metabolism; tetrahydrofolate interconversion. It participates in amino-acid biosynthesis; glycine biosynthesis; glycine from L-serine: step 1/1. In terms of biological role, catalyzes the reversible interconversion of serine and glycine with tetrahydrofolate (THF) serving as the one-carbon carrier. This reaction serves as the major source of one-carbon groups required for the biosynthesis of purines, thymidylate, methionine, and other important biomolecules. Also exhibits THF-independent aldolase activity toward beta-hydroxyamino acids, producing glycine and aldehydes, via a retro-aldol mechanism. This chain is Serine hydroxymethyltransferase, found in Acidobacterium capsulatum (strain ATCC 51196 / DSM 11244 / BCRC 80197 / JCM 7670 / NBRC 15755 / NCIMB 13165 / 161).